Reading from the N-terminus, the 344-residue chain is Heat-inducible transcription repressor HrcA (344 aa).

It belongs to the HrcA family.

Negative regulator of class I heat shock genes (grpE-dnaK-dnaJ and groELS operons). Prevents heat-shock induction of these operons. In Geobacillus kaustophilus (strain HTA426), this protein is Heat-inducible transcription repressor HrcA.